Consider the following 113-residue polypeptide: Iron-sulfur cluster insertion protein ErpA (113 aa).

Positions 41, 105, and 107 each coordinate iron-sulfur cluster.

This sequence belongs to the HesB/IscA family. Homodimer. Iron-sulfur cluster is required as a cofactor.

Functionally, required for insertion of 4Fe-4S clusters for at least IspG. This is Iron-sulfur cluster insertion protein ErpA from Vibrio parahaemolyticus serotype O3:K6 (strain RIMD 2210633).